A 934-amino-acid chain; its full sequence is Phosphoenolpyruvate carboxylase (934 aa).

Residues H161 and K593 contribute to the active site.

It belongs to the PEPCase type 1 family. Mg(2+) serves as cofactor.

It carries out the reaction oxaloacetate + phosphate = phosphoenolpyruvate + hydrogencarbonate. In terms of biological role, forms oxaloacetate, a four-carbon dicarboxylic acid source for the tricarboxylic acid cycle. The protein is Phosphoenolpyruvate carboxylase (ppc) of Mycobacterium leprae (strain TN).